Here is a 353-residue protein sequence, read N- to C-terminus: Protein RecA (353 aa).

67 to 74 (GPESSGKT) serves as a coordination point for ATP.

Belongs to the RecA family.

Its subcellular location is the cytoplasm. Can catalyze the hydrolysis of ATP in the presence of single-stranded DNA, the ATP-dependent uptake of single-stranded DNA by duplex DNA, and the ATP-dependent hybridization of homologous single-stranded DNAs. It interacts with LexA causing its activation and leading to its autocatalytic cleavage. In Salmonella paratyphi A (strain ATCC 9150 / SARB42), this protein is Protein RecA.